A 476-amino-acid chain; its full sequence is Bifunctional protein HldE (476 aa).

The segment at 1–318 (MKPVLPDYSK…AEAVHGSKDT (318 aa)) is ribokinase. Residue 195–198 (NMSE) coordinates ATP. Asp264 is an active-site residue. The tract at residues 344-476 (MTNGCFDILH…IIEAIKGGRG (133 aa)) is cytidylyltransferase.

It in the N-terminal section; belongs to the carbohydrate kinase PfkB family. The protein in the C-terminal section; belongs to the cytidylyltransferase family. As to quaternary structure, homodimer.

The catalysed reaction is D-glycero-beta-D-manno-heptose 7-phosphate + ATP = D-glycero-beta-D-manno-heptose 1,7-bisphosphate + ADP + H(+). It catalyses the reaction D-glycero-beta-D-manno-heptose 1-phosphate + ATP + H(+) = ADP-D-glycero-beta-D-manno-heptose + diphosphate. It functions in the pathway nucleotide-sugar biosynthesis; ADP-L-glycero-beta-D-manno-heptose biosynthesis; ADP-L-glycero-beta-D-manno-heptose from D-glycero-beta-D-manno-heptose 7-phosphate: step 1/4. The protein operates within nucleotide-sugar biosynthesis; ADP-L-glycero-beta-D-manno-heptose biosynthesis; ADP-L-glycero-beta-D-manno-heptose from D-glycero-beta-D-manno-heptose 7-phosphate: step 3/4. Its function is as follows. Catalyzes the phosphorylation of D-glycero-D-manno-heptose 7-phosphate at the C-1 position to selectively form D-glycero-beta-D-manno-heptose-1,7-bisphosphate. Catalyzes the ADP transfer from ATP to D-glycero-beta-D-manno-heptose 1-phosphate, yielding ADP-D-glycero-beta-D-manno-heptose. This chain is Bifunctional protein HldE, found in Vibrio cholerae serotype O1 (strain M66-2).